Here is a 235-residue protein sequence, read N- to C-terminus: MKQKYWNINLEEMMEAGIHFGHQAAKWNPKMKPYIFTERRGIHILNVTKTARLLSEACDFVANAASKGKQFLIVGTKYQAADLVASAALKARCHYVNQKWLGGMLTNWSTIEKRLRKFEDLQTKKNMGALDELPKKEAANLERQLAQLQKYLGGIRYMTNLPDIVIIVDQQKELTAIRECINLNIPTICLVDTDCDPDLTDISIPANDDARASIRWVLDKLTSAIQEGRCNSTKI.

The protein belongs to the universal ribosomal protein uS2 family.

It localises to the plastid. It is found in the chloroplast. This Anthoceros angustus (Hornwort) protein is Small ribosomal subunit protein uS2c (rps2).